A 233-amino-acid chain; its full sequence is 5-demethoxyubiquinone hydroxylase, mitochondrial (233 aa).

The transit peptide at 1-15 (MLSRVSVFKPASRGF) directs the protein to the mitochondrion. Residues serine 20 and serine 28 each carry the phosphoserine modification. The residue at position 32 (threonine 32) is a Phosphothreonine. Fe cation-binding residues include glutamate 63, glutamate 95, histidine 98, glutamate 147, glutamate 194, and histidine 197.

It belongs to the COQ7 family. As to quaternary structure, component of a multi-subunit COQ enzyme complex, composed of at least COQ3, COQ4, COQ5, COQ6, COQ7 and COQ9. It depends on Fe cation as a cofactor. Post-translationally, phosphorylated. Dephosphorylated by PTC7; dephosphorylation is essential for enzyme activation.

It is found in the mitochondrion inner membrane. The catalysed reaction is a 5-methoxy-2-methyl-3-(all-trans-polyprenyl)benzene-1,4-diol + AH2 + O2 = a 3-demethylubiquinol + A + H2O. It catalyses the reaction a 5-methoxy-2-methyl-3-(all-trans-polyprenyl)benzoquinone + NADH + O2 = a 3-demethylubiquinone + NAD(+) + H2O. It functions in the pathway cofactor biosynthesis; ubiquinone biosynthesis. With respect to regulation, dephosphorylation by PTC7 leads to activation. In terms of biological role, catalyzes the hydroxylation of 2-hexaprenyl-3-methyl-6-methoxy-1,4-benzoquinol (DMQH2) during ubiquinone biosynthesis. Also catalyzes the hydroxylation of the 5-methoxy-2-methyl-3-(all-trans-polyprenyl)benzoquinone at the C6 position and participates in the biosynthesis of ubiquinone. Also has a structural role in the COQ enzyme complex, stabilizing COQ3 and COQ4 polypeptides. The chain is 5-demethoxyubiquinone hydroxylase, mitochondrial from Saccharomyces cerevisiae (strain ATCC 204508 / S288c) (Baker's yeast).